Here is a 119-residue protein sequence, read N- to C-terminus: MKGMIFLAAAILSEVFGSTMLKLSEGFSAPLPAAGVIIGFAASFTFLSFSLKTLPLSAAYATWAGTGTALTAAIGHFIFQEPFNLKTLIGLTLIIGGVFLLNSKRTEAADQKAQLTIEI.

The next 4 membrane-spanning stretches (helical) occupy residues 3-23 (GMIFLAAAILSEVFGSTMLKL), 31-51 (LPAAGVIIGFAASFTFLSFSL), 59-79 (AYATWAGTGTALTAAIGHFIF), and 81-101 (EPFNLKTLIGLTLIIGGVFLL).

This sequence belongs to the drug/metabolite transporter (DMT) superfamily. Small multidrug resistance (SMR) (TC 2.A.7.1) family. EbrA/EbrB subfamily. In terms of assembly, the efflux pump is composed of EbrA and EbrB.

The protein localises to the cell membrane. Part of a multidrug efflux pump. Confers resistance to cationic lipophilic dyes such as ethidium bromide, acriflavine, pyronine Y and safranin O. The efflux is probably coupled to an influx of protons. The chain is Multidrug resistance protein EbrB (ebrB) from Bacillus licheniformis (strain ATCC 14580 / DSM 13 / JCM 2505 / CCUG 7422 / NBRC 12200 / NCIMB 9375 / NCTC 10341 / NRRL NRS-1264 / Gibson 46).